The sequence spans 334 residues: Serine racemase (334 aa).

E13 serves as a coordination point for Mg(2+). 5 residues coordinate ATP: S31, S32, I33, K51, and T52. Active-site proton acceptor residues include K56 and S84. K56 is subject to N6-(pyridoxal phosphate)lysine. Position 86 (N86) interacts with pyridoxal 5'-phosphate. Q89 is a binding site for ATP. C113 carries the post-translational modification S-nitrosocysteine. Residue Y121 participates in ATP binding. N154 contacts pyridoxal 5'-phosphate. D178 is a Mg(2+) binding site. Residues G185, G186, G187, G188, and M189 each contribute to the pyridoxal 5'-phosphate site. Mg(2+) is bound by residues E210, A214, D216, and N247. E210, A214, D216, and N247 together coordinate Ca(2+). Residues E210, A214, and D216 each coordinate Mn(2+). ATP is bound at residue K279. S313 is a binding site for pyridoxal 5'-phosphate. N316 is a binding site for ATP.

This sequence belongs to the serine/threonine dehydratase family. As to quaternary structure, homodimer. It depends on Mg(2+) as a cofactor. Mn(2+) serves as cofactor. Ca(2+) is required as a cofactor. Requires pyridoxal 5'-phosphate as cofactor. S-nitrosylated, leading to decrease the enzyme activity.

The catalysed reaction is L-serine = D-serine. The enzyme catalyses L-serine = pyruvate + NH4(+). It catalyses the reaction D-serine = pyruvate + NH4(+). Catalyzes the synthesis of D-serine from L-serine. D-serine is a key coagonist with glutamate at NMDA receptors. Has dehydratase activity towards both L-serine and D-serine. In Bos taurus (Bovine), this protein is Serine racemase (SRR).